Consider the following 379-residue polypeptide: Na(+)/H(+) antiporter NhaA (379 aa).

A run of 12 helical transmembrane segments spans residues 14-34 (AGGI…NTPL), 59-79 (LLMW…GMEV), 95-115 (VFPA…FLVF), 125-145 (GWAI…ALLG), 154-174 (IFLL…IALF), 175-195 (FSHD…AILI), 200-220 (LKIT…ASVL), 221-241 (KSGV…PLNG), 261-281 (FAIL…GMGM), 292-312 (IALG…FVAV), 328-348 (IFAV…LAGL), and 359-379 (VTAL…VLGY).

Belongs to the NhaA Na(+)/H(+) (TC 2.A.33) antiporter family.

The protein resides in the cell inner membrane. The catalysed reaction is Na(+)(in) + 2 H(+)(out) = Na(+)(out) + 2 H(+)(in). Na(+)/H(+) antiporter that extrudes sodium in exchange for external protons. The protein is Na(+)/H(+) antiporter NhaA of Pasteurella multocida (strain Pm70).